The following is a 953-amino-acid chain: Probable LRR receptor-like serine/threonine-protein kinase At1g53420 (953 aa).

The first 22 residues, 1 to 22, serve as a signal peptide directing secretion; it reads MSLNRFLFTSFSFFLFFIVHFA. Over 23–566 the chain is Extracellular; the sequence is SSATLPTQEG…SPRNGMSTGT (544 aa). 6 LRR repeats span residues 63-86, 88-110, 111-132, 135-158, 159-182, and 183-205; these read WSTISRNLKRENLQGSLPKELVGL, LLQEIDLSRNYLNGSIPPEWGVL, PLVNIWLLGNRLTGPIPKEFGN, TLTSLVLEANQLSGELPLELGNLP, NIQQMILSSNNFNGEIPSTFAKLT, and TLRDFRVSDNQLSGTIPDFIQKW. Asn100 and Asn132 each carry an N-linked (GlcNAc...) asparagine glycan. N-linked (GlcNAc...) asparagine glycans are attached at residues Asn265, Asn315, Asn335, Asn378, and Asn423. A helical transmembrane segment spans residues 567 to 587; it reads LHTLVVILSIFIVFLVFGTLW. Residues 588–953 are Cytoplasmic-facing; sequence KKGYLRSKSQ…SDRSESSADH (366 aa). The Protein kinase domain occupies 624–901; sequence FDSANRIGEG…VKMLEGKKMV (278 aa). Residues 630-638 and Lys652 each bind ATP; that span reads IGEGGFGPV. Phosphotyrosine is present on Tyr697. Asp750 functions as the Proton acceptor in the catalytic mechanism. Position 783 is a phosphoserine (Ser783). A phosphothreonine mark is found at Thr784 and Thr789. Tyr797 is modified (phosphotyrosine).

Belongs to the protein kinase superfamily. Ser/Thr protein kinase family.

The protein resides in the membrane. The enzyme catalyses L-seryl-[protein] + ATP = O-phospho-L-seryl-[protein] + ADP + H(+). It catalyses the reaction L-threonyl-[protein] + ATP = O-phospho-L-threonyl-[protein] + ADP + H(+). This Arabidopsis thaliana (Mouse-ear cress) protein is Probable LRR receptor-like serine/threonine-protein kinase At1g53420.